A 460-amino-acid chain; its full sequence is Indoleacetamide hydrolase (460 aa).

Residues Lys-71 and Ser-146 each act as charge relay system in the active site. Ser-169 functions as the Acyl-ester intermediate in the catalytic mechanism.

Belongs to the amidase family.

Its pathway is plant hormone metabolism; auxin biosynthesis. Its function is as follows. Hydrolyzes indole-3-acetamide (IAM) into indole-3-acetic acid (IAA). The polypeptide is Indoleacetamide hydrolase (iaaH) (Pantoea agglomerans pv. gypsophilae (Erwinia herbicola)).